We begin with the raw amino-acid sequence, 461 residues long: Phosphoglucosamine mutase (461 aa).

The active-site Phosphoserine intermediate is the serine 107. Serine 107, aspartate 254, aspartate 256, and aspartate 258 together coordinate Mg(2+). Phosphoserine is present on serine 107.

The protein belongs to the phosphohexose mutase family. Requires Mg(2+) as cofactor. In terms of processing, activated by phosphorylation.

It catalyses the reaction alpha-D-glucosamine 1-phosphate = D-glucosamine 6-phosphate. Functionally, catalyzes the conversion of glucosamine-6-phosphate to glucosamine-1-phosphate. This is Phosphoglucosamine mutase from Bifidobacterium longum subsp. infantis (strain ATCC 15697 / DSM 20088 / JCM 1222 / NCTC 11817 / S12).